Consider the following 218-residue polypeptide: Uridine kinase (218 aa).

16–23 (GGSGSGKT) contacts ATP.

The protein belongs to the uridine kinase family.

Its subcellular location is the cytoplasm. It catalyses the reaction uridine + ATP = UMP + ADP + H(+). The catalysed reaction is cytidine + ATP = CMP + ADP + H(+). It participates in pyrimidine metabolism; CTP biosynthesis via salvage pathway; CTP from cytidine: step 1/3. The protein operates within pyrimidine metabolism; UMP biosynthesis via salvage pathway; UMP from uridine: step 1/1. The chain is Uridine kinase from Limosilactobacillus reuteri (strain DSM 20016) (Lactobacillus reuteri).